A 254-amino-acid chain; its full sequence is Type III pantothenate kinase (254 aa).

6-13 (DVGNTNIV) is a binding site for ATP. Substrate is bound by residues F100 and 107–110 (GADR). D109 functions as the Proton acceptor in the catalytic mechanism. D129 lines the K(+) pocket. T132 contacts ATP. T184 contributes to the substrate binding site.

Belongs to the type III pantothenate kinase family. As to quaternary structure, homodimer. The cofactor is NH4(+). K(+) serves as cofactor.

The protein localises to the cytoplasm. The enzyme catalyses (R)-pantothenate + ATP = (R)-4'-phosphopantothenate + ADP + H(+). Its pathway is cofactor biosynthesis; coenzyme A biosynthesis; CoA from (R)-pantothenate: step 1/5. Its function is as follows. Catalyzes the phosphorylation of pantothenate (Pan), the first step in CoA biosynthesis. The polypeptide is Type III pantothenate kinase (Moorella thermoacetica (strain ATCC 39073 / JCM 9320)).